A 136-amino-acid polypeptide reads, in one-letter code: Nucleoside diphosphate kinase (136 aa).

Positions 10, 58, 86, 92, 104, and 114 each coordinate ATP. The Pros-phosphohistidine intermediate role is filled by His117.

Belongs to the NDK family. As to quaternary structure, homotetramer. Mg(2+) serves as cofactor.

The protein resides in the cytoplasm. The enzyme catalyses a 2'-deoxyribonucleoside 5'-diphosphate + ATP = a 2'-deoxyribonucleoside 5'-triphosphate + ADP. The catalysed reaction is a ribonucleoside 5'-diphosphate + ATP = a ribonucleoside 5'-triphosphate + ADP. In terms of biological role, major role in the synthesis of nucleoside triphosphates other than ATP. The ATP gamma phosphate is transferred to the NDP beta phosphate via a ping-pong mechanism, using a phosphorylated active-site intermediate. The polypeptide is Nucleoside diphosphate kinase (Mycolicibacterium gilvum (strain PYR-GCK) (Mycobacterium gilvum (strain PYR-GCK))).